The primary structure comprises 196 residues: Sesquiterpene phosphatase astK (196 aa).

Belongs to the HAD-like hydrolase superfamily.

The catalysed reaction is (S,S)-drim-8-en-11-yl phosphate + H2O = (S,S)-drim-8-en-11-ol + phosphate. It functions in the pathway secondary metabolite biosynthesis; terpenoid biosynthesis. In terms of biological role, sesquiterpene phosphatase; part of the gene cluster that mediates the biosynthesis of astellolides, drimane-type sesquiterpene esters that show antimicrobial, anti-inflammatory, and anti-tumor activities. The first step in astellolide biosynthesis is performed by the sesquiterpene cyclase astC that catalyzes the formation of drimanyl pyrophosphate from farnesyl pyrophosphate. Drimanyl pyrophosphate is then dephosphorylated by the sesquiterpene phosphatase astI to produce drimanyl monophosphate which is further dephosphorylated to drim-8-ene-11-ol by atsK. Drim-8-ene-11-ol is converted to confertifolin, probably by the cytochrome P450 monooxygenase astD and/or the dehydrogenase astE. The cytochrome P450 monooxygenases astB, astF and astJ then hydroxylate confertifolin at C6, C14, or C15 to form trihydroxy confertifolin. The nonribosomal peptide synthetase astA catalyzes ester bond formation between trihydroxy contifolin and benzoic acid (BA) or 4-hydroxy benzoic acid (4HBA), leading to the formation of dideacetyl astellolides A and B, respectively. Finally, the O-acetyltransferase astG converts dideacetyl astellolides A and B into deacetyl astellolides A and B. The polypeptide is Sesquiterpene phosphatase astK (Aspergillus oryzae (strain ATCC 42149 / RIB 40) (Yellow koji mold)).